Consider the following 906-residue polypeptide: Alanine--tRNA ligase, chloroplastic/mitochondrial (906 aa).

The span at M1–L10 shows a compositional bias: basic and acidic residues. Positions M1–N22 are disordered. Zn(2+) is bound by residues H589, H593, C691, and H695.

The protein belongs to the class-II aminoacyl-tRNA synthetase family. Monomer. It depends on Zn(2+) as a cofactor.

The protein resides in the plastid. Its subcellular location is the chloroplast. The protein localises to the mitochondrion. It catalyses the reaction tRNA(Ala) + L-alanine + ATP = L-alanyl-tRNA(Ala) + AMP + diphosphate. In terms of biological role, catalyzes the attachment of alanine to tRNA(Ala) in a two-step reaction: alanine is first activated by ATP to form Ala-AMP and then transferred to the acceptor end of tRNA(Ala). Also edits incorrectly charged tRNA(Ala) via its editing domain. The protein is Alanine--tRNA ligase, chloroplastic/mitochondrial of Ostreococcus lucimarinus (strain CCE9901).